Consider the following 474-residue polypeptide: Alkylcitrate dehydratase phiI (474 aa).

It belongs to the PrpD family. In terms of assembly, monomer.

The enzyme catalyses (4E,11E)-2-hydroxytrideca-4,11-dien-1,2,3-tricarboxylate + 2 H(+) = [4-(deca-1,8-diyl)-2,5-dioxo-2,5-dihydro-3-furanyl]acetate + 2 H2O. Its pathway is secondary metabolite biosynthesis. In terms of biological role, alkylcitrate dehydratasee; part of the gene cluster that mediates the biosynthesis of the antihypercholesterolemic agents phomoidrides which are dimeric anhydrides. Within the pathway, the alkylcitrate synthase (ACS) tstiJ and the alkylcitrate dehydratase (ACDH) tstI produce the decarboxylated monomeric anhydrides by coupling the C12-fatty acyl product from phiA with oxalacetic acid. The pathway begins with the highly reducing polyketide synthase tstA that catalyzes the formation of a C12-fatty acyl-ACP, starting from one acetate and 5 malonate units. The hydrolase tstM is involved in the release of the C12-fatty acyl chain from phiA. The alkylcitrate synthase (ACS) tstJ and the alkylcitrate dehydratase (ACDH) tstI then give rise to decarboxylated monomeric anhydrides by coupling the C12-fatty acyl chain with oxalacetic acid. The cyclase tstC is responsible for the dimerization of the monomeric anhydrides which leads to the production of prephomoidride that contains the characteristic bicyclo[4.3.1]deca-1,6-diene system of phomoidrides. Iterative oxidation catalyzed by the alpha-ketoglutarate-dependent dioxygenase tstK produced then phomoidride A. Finally, the methyltransferase tstE converts phomoidride A to phomoidride B via an acetalization reaction. The phosphatidylethanolamine-binding protein tstB and tstN are not essential for dimerization and their functions have still to be determined. The protein is Alkylcitrate dehydratase phiI of Talaromyces stipitatus (strain ATCC 10500 / CBS 375.48 / QM 6759 / NRRL 1006) (Penicillium stipitatum).